The primary structure comprises 161 residues: Peptidyl-prolyl cis-trans isomerase-like 1 (161 aa).

The region spanning 1-155 (MATDVVFDTS…DEVKIIRAKV (155 aa)) is the PPIase cyclophilin-type domain.

This sequence belongs to the cyclophilin-type PPIase family. PPIL1 subfamily.

The catalysed reaction is [protein]-peptidylproline (omega=180) = [protein]-peptidylproline (omega=0). Functionally, PPIases accelerate the folding of proteins. It catalyzes the cis-trans isomerization of proline imidic peptide bonds in oligopeptides. This Aspergillus fumigatus (strain ATCC MYA-4609 / CBS 101355 / FGSC A1100 / Af293) (Neosartorya fumigata) protein is Peptidyl-prolyl cis-trans isomerase-like 1 (cyp1).